A 422-amino-acid chain; its full sequence is Serine protease HTRA2, mitochondrial (422 aa).

A mitochondrion-targeting transit peptide spans 1-17 (MALRGSHRLQVILKRCI). The propeptide occupies 18–74 (ASPLFHSHAPNRRSSQPAIKGGEPNSNGNSGHDQQNGERKGKGWRRLVSFFVPFSLG). The interval 24–56 (SHAPNRRSSQPAIKGGEPNSNGNSGHDQQNGER) is disordered. Residues 41 to 51 (PNSNGNSGHDQ) show a composition bias toward polar residues. The chain crosses the membrane as a helical span at residues 64-82 (LVSFFVPFSLGAVVSAAVI). Short sequence motifs (IAP-binding) lie at residues 75–78 (AVVS) and 94–97 (SKMT). Residues 139–302 (SNGSGFIIEQ…IPIDYVKVFL (164 aa)) form a serine protease region. Catalysis depends on charge relay system residues His-157, Asp-189, and Ser-266. The PDZ domain maps to 325 to 410 (MGITMLTLTP…NLDIVILRGV (86 aa)).

It belongs to the peptidase S1C family. In terms of assembly, interacts with th/DIAP1 (via BIR 2 domain).

It localises to the mitochondrion intermembrane space. It is found in the mitochondrion membrane. The enzyme catalyses Cleavage of non-polar aliphatic amino-acids at the P1 position, with a preference for Val, Ile and Met. At the P2 and P3 positions, Arg is selected most strongly with a secondary preference for other hydrophilic residues.. Functionally, serine protease that shows proteolytic activity against a non-specific substrate beta-casein. Promotes or induces cell death either by direct binding to and inhibition of BIRC proteins (also called inhibitor of apoptosis proteins, IAPs), leading to an increase in caspase activity, or by a BIRC inhibition-independent, caspase-independent and serine protease activity-dependent mechanism. Can antagonize antiapoptotic activity of th/Diap1 by directly inducing the degradation of th/Diap1. This Drosophila erecta (Fruit fly) protein is Serine protease HTRA2, mitochondrial.